The sequence spans 517 residues: Endoglycoceramidase (517 aa).

Positions 1 to 17 (MISVALIILFLAKVISG) are cleaved as a signal peptide. Asn99 carries an N-linked (GlcNAc...) asparagine glycan. Glu230 acts as the Proton donor in catalysis. Residues Asn298, Asn380, and Asn393 are each glycosylated (N-linked (GlcNAc...) asparagine).

The protein belongs to the glycosyl hydrolase 5 (cellulase A) family. In terms of tissue distribution, expressed uniformly in digestive cells, tentacles and peduncle regions suggesting expression in the endoderm throughout the whole body (at protein level).

The protein localises to the secreted. It carries out the reaction an oligoglycosyl-(1-&gt;4)-beta-D-glucosyl-(1&lt;-&gt;1)-ceramide + H2O = an oligoglycosyl-(1-&gt;4)-D-glucose + an N-acyl-sphingoid base. Its activity is regulated as follows. Cu(2+), zinc, manganese, calcium, magnesium and EDTA have no significant effects on enzyme activity. Enzyme requires presence of detergents such as Triton X-100 and Lubrol PX for the hydrolysis of glycosphingolipids. Taurodeoxycholate strongly inhibits the enzyme activity. Functionally, hydrolysis of the glycosidic linkage between oligosaccharides and ceramides of glycosphingolipids, optimal substrates appear to be the glycosphingolipids with a gangliotetraose structure. The chain is Endoglycoceramidase from Hydra vulgaris (Hydra).